Consider the following 308-residue polypeptide: GTP cyclohydrolase MptA (308 aa).

A disordered region spans residues Asn282–Ala308.

Belongs to the GTP cyclohydrolase IV family. In terms of assembly, homodimer. Fe(2+) serves as cofactor.

The enzyme catalyses GTP + H2O = 7,8-dihydroneopterin 2',3'-cyclic phosphate + formate + diphosphate + H(+). Its pathway is cofactor biosynthesis; 5,6,7,8-tetrahydromethanopterin biosynthesis. Converts GTP to 7,8-dihydro-D-neopterin 2',3'-cyclic phosphate, the first intermediate in the biosynthesis of coenzyme methanopterin. Involved in archaeosine (G(+)) and folate biosynthesis. In Haloferax volcanii (strain ATCC 29605 / DSM 3757 / JCM 8879 / NBRC 14742 / NCIMB 2012 / VKM B-1768 / DS2) (Halobacterium volcanii), this protein is GTP cyclohydrolase MptA.